Consider the following 304-residue polypeptide: Probable solute-binding protein AdeT1 (304 aa).

It belongs to the bacterial solute-binding protein 7 family.

In terms of biological role, mediates antimicrobial resistance via active efflux. Contributes to resistance to antibiotics such as chloramphenicol, erythromycin and novobiocin. May be part of a tripartite ATP-independent periplasmic (TRAP) transport system. This chain is Probable solute-binding protein AdeT1, found in Acinetobacter baumannii.